We begin with the raw amino-acid sequence, 300 residues long: Protein YIF1B (300 aa).

The segment at 1-46 (MNQESSFRAPPKRRVRGPNPNISTPHQLFDDTSGGPVPHGGEYPNH) is disordered. The Cytoplasmic portion of the chain corresponds to 1–142 (MNQESSFRAP…APRFDINAPD (142 aa)). A helical transmembrane segment spans residues 143–163 (LYIPVMAFITYILVAGLALGT). The Extracellular portion of the chain corresponds to 164–178 (QSRFSPEILGMQASS). The helical transmembrane segment at 179–199 (ALAWLIVEVLAILLSLYLVTV) threads the bilayer. The Cytoplasmic portion of the chain corresponds to 200–205 (NTDLTT). A helical transmembrane segment spans residues 206–226 (VDLVAFSGYKYVGMISGVISG). A topological domain (extracellular) is located at residue Leu-227. The helical transmembrane segment at 228–248 (LFGKTGYYVVLSWCGISVVFF) threads the bilayer. The Cytoplasmic segment spans residues 249 to 278 (MIRTLRLKILSEAAAEGVLVRGARNQLRMY). Residues 279–299 (LTMAIAAVQPIFMYWLTYHLV) traverse the membrane as a helical segment. Residue Arg-300 is a topological domain, extracellular.

Belongs to the YIF1 family.

Its subcellular location is the endoplasmic reticulum membrane. The protein localises to the golgi apparatus membrane. It localises to the endoplasmic reticulum-Golgi intermediate compartment membrane. Its function is as follows. Functions in endoplasmic reticulum to Golgi vesicle-mediated transport and regulates the proper organization of the endoplasmic reticulum and the Golgi. Plays a key role in targeting to neuronal dendrites receptors such as HTR1A. Plays also a role in primary cilium and sperm flagellum assembly probably through protein transport to these compartments. The chain is Protein YIF1B (yif1b) from Xenopus tropicalis (Western clawed frog).